The sequence spans 1351 residues: uncharacterized protein (1351 aa).

Residues 1–17 show a composition bias toward basic and acidic residues; the sequence is MSKKDSKNSPKKSKDTN. A disordered region spans residues 1–31; sequence MSKKDSKNSPKKSKDTNSDESSSSNAETSSD. The span at 19 to 31 shows a compositional bias: low complexity; sequence DESSSSNAETSSD.

This is an uncharacterized protein from Acanthamoeba polyphaga mimivirus (APMV).